The primary structure comprises 192 residues: Fe/S biogenesis protein NfuA (192 aa).

[4Fe-4S] cluster-binding residues include C149 and C152.

This sequence belongs to the NfuA family. As to quaternary structure, homodimer. [4Fe-4S] cluster serves as cofactor.

Involved in iron-sulfur cluster biogenesis. Binds a 4Fe-4S cluster, can transfer this cluster to apoproteins, and thereby intervenes in the maturation of Fe/S proteins. Could also act as a scaffold/chaperone for damaged Fe/S proteins. The chain is Fe/S biogenesis protein NfuA from Tolumonas auensis (strain DSM 9187 / NBRC 110442 / TA 4).